The chain runs to 406 residues: Ribulose bisphosphate carboxylase large chain (406 aa).

Substrate contacts are provided by N101 and T151. The Proton acceptor role is filled by K153. A substrate-binding site is contributed by K155. Mg(2+) is bound by residues K179, D181, and E182. At K179 the chain carries N6-carboxylysine. H272 serves as the catalytic Proton acceptor. The substrate site is built by R273, H305, and S357.

Belongs to the RuBisCO large chain family. Type I subfamily. Heterohexadecamer of 8 large chains and 8 small chains; disulfide-linked. The disulfide link is formed within the large subunit homodimers. It depends on Mg(2+) as a cofactor. In terms of processing, the disulfide bond which can form in the large chain dimeric partners within the hexadecamer appears to be associated with oxidative stress and protein turnover.

The protein resides in the plastid. It localises to the chloroplast. It carries out the reaction 2 (2R)-3-phosphoglycerate + 2 H(+) = D-ribulose 1,5-bisphosphate + CO2 + H2O. The catalysed reaction is D-ribulose 1,5-bisphosphate + O2 = 2-phosphoglycolate + (2R)-3-phosphoglycerate + 2 H(+). Functionally, ruBisCO catalyzes two reactions: the carboxylation of D-ribulose 1,5-bisphosphate, the primary event in carbon dioxide fixation, as well as the oxidative fragmentation of the pentose substrate in the photorespiration process. Both reactions occur simultaneously and in competition at the same active site. This is Ribulose bisphosphate carboxylase large chain (rbcL) from Trichomanes striatum (Fern).